Consider the following 92-residue polypeptide: Ig kappa chain V region 3381 (92 aa).

Residues 1–23 are framework-1; that stretch reads AFELTQTPASVEAAVGGTVTINC. Residues 24-34 form a complementarity-determining-1 region; that stretch reads QASESISNWLA. Positions 35–49 are framework-2; that stretch reads WYQQKPGQPXKLLIY. The complementarity-determining-2 stretch occupies residues 50-56; it reads KASTLAS. Residues 57–88 are framework-3; the sequence is GVSSRFKGSGSGTQFTLTISDLECADAATYYC. The complementarity-determining-3 stretch occupies residues 89-92; that stretch reads QSTD.

The sequence is that of Ig kappa chain V region 3381 from Oryctolagus cuniculus (Rabbit).